We begin with the raw amino-acid sequence, 229 residues long: Cytochrome c oxidase subunit 2 (229 aa).

Residues 1-26 (MATWAQFGLQDASSPLMEELTYFHDY) lie on the Mitochondrial intermembrane side of the membrane. A helical membrane pass occupies residues 27–48 (ALIVLTLITILVFYGLVSLLLS). Residues 49–62 (SSTNRFFLEGQELE) are Mitochondrial matrix-facing. The chain crosses the membrane as a helical span at residues 63–82 (TIWTVVPAFILIFIALPSLQ). Residues 83-229 (LLYLMDEVNN…ENWVAQYIEE (147 aa)) are Mitochondrial intermembrane-facing. Residues H161, C196, E198, C200, H204, and M207 each contribute to the Cu cation site. E198 lines the Mg(2+) pocket.

Belongs to the cytochrome c oxidase subunit 2 family. In terms of assembly, component of the cytochrome c oxidase (complex IV, CIV), a multisubunit enzyme composed of a catalytic core of 3 subunits and several supernumerary subunits. The complex exists as a monomer or a dimer and forms supercomplexes (SCs) in the inner mitochondrial membrane with ubiquinol-cytochrome c oxidoreductase (cytochrome b-c1 complex, complex III, CIII). Requires Cu cation as cofactor.

The protein localises to the mitochondrion inner membrane. It catalyses the reaction 4 Fe(II)-[cytochrome c] + O2 + 8 H(+)(in) = 4 Fe(III)-[cytochrome c] + 2 H2O + 4 H(+)(out). Functionally, component of the cytochrome c oxidase, the last enzyme in the mitochondrial electron transport chain which drives oxidative phosphorylation. The respiratory chain contains 3 multisubunit complexes succinate dehydrogenase (complex II, CII), ubiquinol-cytochrome c oxidoreductase (cytochrome b-c1 complex, complex III, CIII) and cytochrome c oxidase (complex IV, CIV), that cooperate to transfer electrons derived from NADH and succinate to molecular oxygen, creating an electrochemical gradient over the inner membrane that drives transmembrane transport and the ATP synthase. Cytochrome c oxidase is the component of the respiratory chain that catalyzes the reduction of oxygen to water. Electrons originating from reduced cytochrome c in the intermembrane space (IMS) are transferred via the dinuclear copper A center (CU(A)) of subunit 2 and heme A of subunit 1 to the active site in subunit 1, a binuclear center (BNC) formed by heme A3 and copper B (CU(B)). The BNC reduces molecular oxygen to 2 water molecules using 4 electrons from cytochrome c in the IMS and 4 protons from the mitochondrial matrix. The polypeptide is Cytochrome c oxidase subunit 2 (COII) (Paracentrotus lividus (Common sea urchin)).